Reading from the N-terminus, the 258-residue chain is Regulatory protein RecX (258 aa).

Belongs to the RecX family.

It localises to the cytoplasm. In terms of biological role, modulates RecA activity. The protein is Regulatory protein RecX of Streptococcus pneumoniae (strain 70585).